Consider the following 441-residue polypeptide: Methylenetetrahydrofolate--tRNA-(uracil-5-)-methyltransferase TrmFO (441 aa).

11-16 (GAGLAG) lines the FAD pocket.

It belongs to the MnmG family. TrmFO subfamily. FAD is required as a cofactor.

It localises to the cytoplasm. It catalyses the reaction uridine(54) in tRNA + (6R)-5,10-methylene-5,6,7,8-tetrahydrofolate + NADH + H(+) = 5-methyluridine(54) in tRNA + (6S)-5,6,7,8-tetrahydrofolate + NAD(+). The catalysed reaction is uridine(54) in tRNA + (6R)-5,10-methylene-5,6,7,8-tetrahydrofolate + NADPH + H(+) = 5-methyluridine(54) in tRNA + (6S)-5,6,7,8-tetrahydrofolate + NADP(+). Functionally, catalyzes the folate-dependent formation of 5-methyl-uridine at position 54 (M-5-U54) in all tRNAs. The chain is Methylenetetrahydrofolate--tRNA-(uracil-5-)-methyltransferase TrmFO from Lactiplantibacillus plantarum (strain ATCC BAA-793 / NCIMB 8826 / WCFS1) (Lactobacillus plantarum).